Reading from the N-terminus, the 341-residue chain is Outer membrane protein U (341 aa).

The first 21 residues, 1 to 21 (MNKTLIALAVSAAAVATGAYA), serve as a signal peptide directing secretion.

It belongs to the Gram-negative porin family. As to quaternary structure, homotrimer.

Its subcellular location is the cell outer membrane. Functionally, forms pores that allow passive diffusion of small molecules across the outer membrane. This is Outer membrane protein U (ompU) from Vibrio cholerae serotype O1 (strain ATCC 39315 / El Tor Inaba N16961).